The primary structure comprises 61 residues: Large ribosomal subunit protein bL28 (61 aa).

The protein belongs to the bacterial ribosomal protein bL28 family.

This is Large ribosomal subunit protein bL28 from Lactobacillus gasseri (strain ATCC 33323 / DSM 20243 / BCRC 14619 / CIP 102991 / JCM 1131 / KCTC 3163 / NCIMB 11718 / NCTC 13722 / AM63).